We begin with the raw amino-acid sequence, 167 residues long: Leptin (167 aa).

The first 21 residues, 1-21, serve as a signal peptide directing secretion; it reads MRCGSLCRFLWLWSCLPYIEA. A disulfide bond links Cys-117 and Cys-167.

Belongs to the leptin family.

It localises to the secreted. Key player in the regulation of energy balance and body weight control. Once released into the circulation, has central and peripheral effects by binding LEPR, found in many tissues, which results in the activation of several major signaling pathways. In the hypothalamus, acts as an appetite-regulating factor that induces a decrease in food intake and an increase in energy consumption by inducing anorexinogenic factors and suppressing orexigenic neuropeptides, also regulates bone mass and secretion of hypothalamo-pituitary-adrenal hormones. In the periphery, increases basal metabolism, influences reproductive function, regulates pancreatic beta-cell function and insulin secretion, is pro-angiogenic for endothelial cell and affects innate and adaptive immunity. In the arcuate nucleus of the hypothalamus, activates by depolarization POMC neurons inducing FOS and SOCS3 expression to release anorexigenic peptides and inhibits by hyperpolarization NPY neurons inducing SOCS3 with a consequent reduction on release of orexigenic peptides. In addition to its known satiety inducing effect, has a modulatory role in nutrient absorption. In the intestine, reduces glucose absorption by enterocytes by activating PKC and leading to a sequential activation of p38, PI3K and ERK signaling pathways which exerts an inhibitory effect on glucose absorption. Acts as a growth factor on certain tissues, through the activation of different signaling pathways increases expression of genes involved in cell cycle regulation such as CCND1, via JAK2-STAT3 pathway, or VEGFA, via MAPK1/3 and PI3K-AKT1 pathways. May also play an apoptotic role via JAK2-STAT3 pathway and up-regulation of BIRC5 expression. Pro-angiogenic, has mitogenic activity on vascular endothelial cells and plays a role in matrix remodeling by regulating the expression of matrix metalloproteinases (MMPs) and tissue inhibitors of metalloproteinases (TIMPs). In innate immunity, modulates the activity and function of neutrophils by increasing chemotaxis and the secretion of oxygen radicals. Increases phagocytosis by macrophages and enhances secretion of pro-inflammatory mediators. Increases cytotoxic ability of NK cells. Plays a pro-inflammatory role, in synergy with IL1B, by inducing NOS2 which promotes the production of IL6, IL8 and Prostaglandin E2, through a signaling pathway that involves JAK2, PI3K, MAP2K1/MEK1 and MAPK14/p38. In adaptive immunity, promotes the switch of memory T-cells towards T helper-1 cell immune responses. Increases CD4(+)CD25(-) T-cell proliferation and reduces autophagy during TCR (T-cell receptor) stimulation, through MTOR signaling pathway activation and BCL2 up-regulation. The protein is Leptin (LEP) of Halichoerus grypus (Gray seal).